The chain runs to 137 residues: Large ribosomal subunit protein uL16 (137 aa).

This sequence belongs to the universal ribosomal protein uL16 family. Part of the 50S ribosomal subunit.

Binds 23S rRNA and is also seen to make contacts with the A and possibly P site tRNAs. The chain is Large ribosomal subunit protein uL16 from Streptococcus equi subsp. zooepidemicus (strain H70).